Here is an 805-residue protein sequence, read N- to C-terminus: MFDITRKCVEWGDRLLVIESGKIARQADGAVVVDYGGTSVLSTVVSQKSKEPVDFLPLTVQFLAKSYAIGRIPGGFFKREGKPSDRETLISRLVDRSIRPLFPTGFCDEIVIVCNLLSYDQVSPPETVALIGAAAALAISGIPFPTPIAGAKIGYIREEERYILNPSAEELARSELDMFYSGTKSSVVMVESEASELSEEEMLGAVTFGHENCAQVLDLIEEFAEAAGPKDVVEFVPHDIGKVVSDISSGYSEKFSVAYSDHNKKTRVLQLDAAREGLYSDLCRKHVEESGEYTEQEVLLAIKTFERSLVRARVLDTLKRVDGRGFDQIRNIEIEVDLIPRSHGSALFTRGDTQALVITALGTPQDEQVVDGFDGDRRERFLLHYNFPSYAVGEAAALRPPGRREIGHGKLAWRAIHPVLPTKADFPYTIRVVSEITESDGSSSMATVCGASLALMDTGVPLKSSVAGIAMGLIKEGDRYAVLSDIIGDEDYLGDMDFKVAGTKDGITALQMDMKIRGIGFDIIEKSLQQAKDGRLFIIGKMDKVIKESREGVRDHVPRMESMIIDKNKIKNVIGTGGKNVREICEKTGVKIEISQDGTVMIYAVSRDAVEEAKNMIMCIVSEPEVGKVFSGVISEIAKYGAFVSFLGGRRGLVHISEIKNEHIGSVSDVLAVDDKVKVLVIGIDKDHVQLSMRRVDQDSGDLLEHESYSSSKKNGPQSGDASGGASGFRDYASGPARERRRSGGSGGRPVRRRSAGSSGSGSGGYYSVPQHVGTPDPVNGNDRRRGSGPQHASGGGGNKKPRFF.

2 residues coordinate Mg(2+): aspartate 491 and aspartate 497. Residues 558–617 (PRMESMIIDKNKIKNVIGTGGKNVREICEKTGVKIEISQDGTVMIYAVSRDAVEEAKNMI) form the KH domain. Residues 627–694 (GKVFSGVISE…DKDHVQLSMR (68 aa)) form the S1 motif domain. Residues 702–805 (DLLEHESYSS…GGGNKKPRFF (104 aa)) form a disordered region. Positions 709–721 (YSSSKKNGPQSGD) are enriched in polar residues.

This sequence belongs to the polyribonucleotide nucleotidyltransferase family. Mg(2+) is required as a cofactor.

The protein localises to the cytoplasm. The catalysed reaction is RNA(n+1) + phosphate = RNA(n) + a ribonucleoside 5'-diphosphate. Functionally, involved in mRNA degradation. Catalyzes the phosphorolysis of single-stranded polyribonucleotides processively in the 3'- to 5'-direction. The chain is Polyribonucleotide nucleotidyltransferase from Anaplasma marginale (strain St. Maries).